We begin with the raw amino-acid sequence, 156 residues long: Extracellular giant hemoglobin major globin subunit A1 (156 aa).

Residues 1–16 (MKVLIIFACLVVMASA) form the signal peptide. The 140-residue stretch at 17–156 (VCNRLEQILV…YERIASGISG (140 aa)) folds into the Globin domain. An intrachain disulfide couples Cys-18 to Cys-146. Cys-79 contributes to the hydrogen sulfide binding site. His-110 is a binding site for heme b.

Belongs to the globin family. In terms of assembly, the 400 kDa hemoglobin consists of a spherical 24-mer arranged as a double layer of dome-shaped dodecamers. Each dodecamer is composed of the 3-fold trimer of the tetramer A1-A2-B1-B2 having one intra-tetramer (A1-B2) disulfide bond and one inter-tetramer (B1-B2) disulfide bond per tetramer.

Its subcellular location is the secreted. In terms of biological role, the extracellular giant hemoglobin is able to bind and transport oxygen and hydrosulfide simultaneously and reversibly at two different sites. This is Extracellular giant hemoglobin major globin subunit A1 (ghbA1) from Oligobrachia mashikoi (Beard worm).